An 871-amino-acid chain; its full sequence is Protein TIC 100 (871 aa).

The disordered stretch occupies residues 1–85 (MANEELTESQ…NANPETNIRR (85 aa)). Residues 8 to 20 (ESQQQEDPSQQLP) are compositionally biased toward polar residues. Residues 30–46 (SDSNSDSDASSQSSGDD) show a composition bias toward low complexity. MORN repeat units lie at residues 219 to 239 (YEGT…AENG), 243 to 257 (YEGE…GHGV), and 337 to 352 (YAGQ…CGVY). Residue Asn-238 is modified to Deamidated asparagine. Positions 587-647 (MLDGLEKWTE…QEEEKKTEMG (61 aa)) form a coiled coil. 2 disordered regions span residues 631-654 (EELK…EDED) and 669-721 (KEKI…NSPF). A compositionally biased stretch (basic and acidic residues) spans 632 to 645 (ELKKKEQEEEKKTE). Residue Thr-649 is modified to Phosphothreonine. Residues 669-683 (KEKIQENKQEEKYKD) are compositionally biased toward basic and acidic residues. A compositionally biased stretch (acidic residues) spans 684–704 (DDDEDDDDGDDDDDDDDDDDL).

As to quaternary structure, part of the Tic complex. Component of the 1-MD complex, composed of TIC20-I, TIC214, TIC100 and TIC56. Interacts with the translocating preproteins. Hydrolysis of ATP is essential for the formation of this complex. The 1-MD complex interacts with TIC21. As to expression, preferentially expressed in ovules, and moderately expressed in leaves and siliques.

It localises to the plastid. It is found in the chloroplast inner membrane. In terms of biological role, involved in protein precursor import into chloroplasts. May be part of an intermediate translocation complex acting as a protein-conducting channel at the inner envelope. Plays an important role during embryogenesis and chloroplast biogenesis. This chain is Protein TIC 100, found in Arabidopsis thaliana (Mouse-ear cress).